Here is a 95-residue protein sequence, read N- to C-terminus: Class I hydrophobin 13 (95 aa).

4 disulfides stabilise this stretch: Cys14-Cys74, Cys21-Cys68, Cys22-Cys55, and Cys75-Cys88. Residues Asn23 and Asn77 are each glycosylated (N-linked (GlcNAc...) asparagine).

It belongs to the fungal hydrophobin family. In terms of assembly, self-assembles to form functional amyloid fibrils called rodlets. Self-assembly into fibrillar rodlets occurs spontaneously at hydrophobic:hydrophilic interfaces and the rodlets further associate laterally to form amphipathic monolayers.

It localises to the secreted. It is found in the cell wall. Its function is as follows. Aerial growth, conidiation, and dispersal of filamentous fungi in the environment rely upon a capability of their secreting small amphipathic proteins called hydrophobins (HPBs) with low sequence identity. Class I can self-assemble into an outermost layer of rodlet bundles on aerial cell surfaces, conferring cellular hydrophobicity that supports fungal growth, development and dispersal; whereas Class II form highly ordered films at water-air interfaces through intermolecular interactions but contribute nothing to the rodlet structure. The sequence is that of Class I hydrophobin 13 from Pleurotus ostreatus (strain PC15) (Oyster mushroom).